A 364-amino-acid polypeptide reads, in one-letter code: TD and POZ domain-containing protein 2 (364 aa).

The 131-residue stretch at 19–149 (EFCYEWTISN…KDKLTLCCKV (131 aa)) folds into the MATH domain. Residues 188 to 255 (TDCSLLVAGH…IYTGKAPTLH (68 aa)) enclose the BTB domain.

It belongs to the Tdpoz family.

The polypeptide is TD and POZ domain-containing protein 2 (Mus musculus (Mouse)).